Consider the following 124-residue polypeptide: UPF0231 protein SO_3983 (124 aa).

The protein belongs to the UPF0231 family.

This Shewanella oneidensis (strain ATCC 700550 / JCM 31522 / CIP 106686 / LMG 19005 / NCIMB 14063 / MR-1) protein is UPF0231 protein SO_3983.